A 687-amino-acid polypeptide reads, in one-letter code: Macrolide export ATP-binding/permease protein MacB (687 aa).

The region spanning 6 to 244 is the ABC transporter domain; it reads LKLAAVTRRF…LAEAGVDAAE (239 aa). 42–49 serves as a coordination point for ATP; sequence GASGSGKS. The span at 246 to 256 shows a compositional bias: low complexity; sequence AEASEAAVGES. The segment at 246–281 is disordered; sequence AEASEAAVGESPTRNRHDTPAPPAAVDTDPHVDTGT. Helical transmembrane passes span 312–332, 560–580, 617–637, and 650–670; these read LLTM…VAIG, LTLL…IGVM, LVCL…GALF, and AGAI…FGFM.

Belongs to the ABC transporter superfamily. Macrolide exporter (TC 3.A.1.122) family. In terms of assembly, homodimer.

Its subcellular location is the cell inner membrane. Its function is as follows. Non-canonical ABC transporter that contains transmembrane domains (TMD), which form a pore in the inner membrane, and an ATP-binding domain (NBD), which is responsible for energy generation. Confers resistance against macrolides. The protein is Macrolide export ATP-binding/permease protein MacB of Burkholderia lata (strain ATCC 17760 / DSM 23089 / LMG 22485 / NCIMB 9086 / R18194 / 383).